The chain runs to 488 residues: Erythromycin resistance ATP-binding protein MsrA (488 aa).

One can recognise an ABC transporter 1 domain in the interval 6–199 (IKFNQINHKL…NQYEQEQLEQ (194 aa)). 38–45 (GGNGTGKT) is an ATP binding site. The tract at residues 200–298 (QRKYEQYISE…KIYDIHNNYP (99 aa)) is Q-linker, rich in Glu and hydrophilic AA. Positions 211-255 (QRLSQASKAKRNQAQQMAQASSKQKNKSIAPDRLSASKEKGTVEK) are disordered. Residues 222–233 (NQAQQMAQASSK) are compositionally biased toward low complexity. Positions 245–255 (SASKEKGTVEK) are enriched in basic and acidic residues. Residues 299 to 487 (IIAQNLTLVK…ELTGQSIHDI (189 aa)) enclose the ABC transporter 2 domain. 331 to 338 (GANGVGKT) lines the ATP pocket.

The protein belongs to the ABC transporter superfamily.

In terms of biological role, confers resistance to 14-membered ring macrolides (like erythromycin) and to B streptogramins, by acting as an ATP-dependent efflux pump. This is Erythromycin resistance ATP-binding protein MsrA (msrA) from Staphylococcus epidermidis.